The sequence spans 525 residues: Sensory neuron membrane protein 1 (525 aa).

Over 1-11 (MLLPKPLKYAA) the chain is Cytoplasmic. A helical transmembrane segment spans residues 12–32 (IGGGVFVFGILIGWVIFPVIL). The Extracellular portion of the chain corresponds to 33–456 (KSQIKKEMAL…LKHQLFIPKR (424 aa)). N-linked (GlcNAc...) asparagine glycosylation is found at asparagine 67, asparagine 105, and asparagine 229. 3 disulfide bridges follow: cysteine 268-cysteine 333, cysteine 297-cysteine 352, and cysteine 335-cysteine 341. N-linked (GlcNAc...) asparagine glycosylation occurs at asparagine 440. A helical membrane pass occupies residues 457–477 (IVGVIRWWMVSFGLIAVLAGV). The Cytoplasmic portion of the chain corresponds to 478 to 525 (MYHFKDNIMGWAAKGESTTAKVNPEDGSNEQRGVSVIGQDREPPKVTM). The tract at residues 496 to 525 (TAKVNPEDGSNEQRGVSVIGQDREPPKVTM) is disordered. The span at 516–525 (QDREPPKVTM) shows a compositional bias: basic and acidic residues.

It belongs to the CD36 family. In terms of tissue distribution, principal component of the olfactory cilia membrane. Localizes to the somata, dendritic neck and cilia of the olfactory neurons (at protein level). Not detected in the axons of ORNs, the cytoplasm of auxiliary cells or non-sensory structures. Expression is universal among ORNs but differential between neuron and sensillum types.

It is found in the cell membrane. Its function is as follows. Plays an olfactory role that is not restricted to pheromone sensitivity. May be involved in the odor detection properties of the olfactory receptor neurons (ORNs) rather than their differentiation and growth. The protein is Sensory neuron membrane protein 1 of Antheraea polyphemus (Polyphemus moth).